The sequence spans 445 residues: Argininosuccinate synthase (445 aa).

ATP contacts are provided by residues 17–25 (AFSGGLDTS) and Ala43. Tyr99 lines the L-citrulline pocket. Gly129 and Thr131 together coordinate ATP. Positions 131, 135, and 136 each coordinate L-aspartate. An L-citrulline-binding site is contributed by Asn135. Position 136 (Asp136) interacts with ATP. Residues Arg139 and Ser192 each coordinate L-citrulline. Asp194 lines the ATP pocket. The L-citrulline site is built by Thr201, Glu203, and Glu280.

The protein belongs to the argininosuccinate synthase family. Type 2 subfamily. Homotetramer.

Its subcellular location is the cytoplasm. It carries out the reaction L-citrulline + L-aspartate + ATP = 2-(N(omega)-L-arginino)succinate + AMP + diphosphate + H(+). The protein operates within amino-acid biosynthesis; L-arginine biosynthesis; L-arginine from L-ornithine and carbamoyl phosphate: step 2/3. This chain is Argininosuccinate synthase, found in Afipia carboxidovorans (strain ATCC 49405 / DSM 1227 / KCTC 32145 / OM5) (Oligotropha carboxidovorans).